The chain runs to 327 residues: Probable cell division protein WhiA (327 aa).

The segment at residues 275–308 is a DNA-binding region (H-T-H motif); sequence SLEELGRLADPVMTKDAVAGRIRRLLSMADRKAK. The interval 307–327 is disordered; it reads AKTEGIPDTESAVTPELLEEA.

The protein belongs to the WhiA family.

Involved in cell division and chromosome segregation. In Mycobacteroides abscessus (strain ATCC 19977 / DSM 44196 / CCUG 20993 / CIP 104536 / JCM 13569 / NCTC 13031 / TMC 1543 / L948) (Mycobacterium abscessus), this protein is Probable cell division protein WhiA.